A 407-amino-acid polypeptide reads, in one-letter code: Imidazolonepropionase (407 aa).

The Fe(3+) site is built by H68 and H70. H68 and H70 together coordinate Zn(2+). 3 residues coordinate 4-imidazolone-5-propanoate: R77, Y140, and H173. Y140 contacts N-formimidoyl-L-glutamate. H238 contacts Fe(3+). Residue H238 coordinates Zn(2+). Q241 is a binding site for 4-imidazolone-5-propanoate. D313 is a Fe(3+) binding site. D313 contacts Zn(2+). N-formimidoyl-L-glutamate-binding residues include N315 and G317. T318 is a binding site for 4-imidazolone-5-propanoate.

Belongs to the metallo-dependent hydrolases superfamily. HutI family. Requires Zn(2+) as cofactor. Fe(3+) is required as a cofactor.

The protein resides in the cytoplasm. The enzyme catalyses 4-imidazolone-5-propanoate + H2O = N-formimidoyl-L-glutamate. The protein operates within amino-acid degradation; L-histidine degradation into L-glutamate; N-formimidoyl-L-glutamate from L-histidine: step 3/3. Functionally, catalyzes the hydrolytic cleavage of the carbon-nitrogen bond in imidazolone-5-propanoate to yield N-formimidoyl-L-glutamate. It is the third step in the universal histidine degradation pathway. This chain is Imidazolonepropionase, found in Burkholderia ambifaria (strain MC40-6).